We begin with the raw amino-acid sequence, 477 residues long: PTS system glucose-specific EIICB component (477 aa).

The Cytoplasmic segment spans residues 1–14 (MFKNAFANLQKVGK). In terms of domain architecture, PTS EIIC type-1 spans 1-388 (MFKNAFANLQ…LDLKTPGRED (388 aa)). The chain crosses the membrane as a helical span at residues 15–35 (SLMLPVSVLPIAGILLGVGSA). The Periplasmic segment spans residues 36 to 50 (NFSWLPAVVSHVMAE). Residues 51 to 71 (AGGSVFANMPLIFAIGVALGF) traverse the membrane as a helical segment. Residues 72-79 (TNNDGVSA) lie on the Cytoplasmic side of the membrane. The helical transmembrane segment at 80–100 (LAAVVAYGIMVKTMAVVAPLV) threads the bilayer. Residues 101–111 (LHLPAEEIASK) are Periplasmic-facing. The helical transmembrane segment at 112–132 (HLADTGVLGGIISGAIAAYMF) threads the bilayer. At 133-151 (NRFYRIKLPEYLGFFAGKR) the chain is on the cytoplasmic side. Residues 152–172 (FVPIISGLAAIFTGVVLSFIW) traverse the membrane as a helical segment. Topologically, residues 173–190 (PPIGSAIQTFSQWAAYQN) are periplasmic. The helical transmembrane segment at 191 to 211 (PVVAFGIYGFIERCLVPFGLH) threads the bilayer. At 212–249 (HIWNVPFQMQIGEYTNAAGQVFHGDIPRYMAGDPTAGK) the chain is on the cytoplasmic side. A helical transmembrane segment spans residues 250-270 (LSGGFLFKMYGLPAAAIAIWH). Over 271–279 (SAKPENRAK) the chain is Periplasmic. Residues 280-300 (VGGIMISAALTSFLTGITEPI) traverse the membrane as a helical segment. At 301–309 (EFSFMFVAP) the chain is on the cytoplasmic side. Residues 310–330 (ILYIIHAILAGLAFPICILLG) traverse the membrane as a helical segment. Residues 331–355 (MRDGTSFSHGLIDFIVLSGNSSKLW) are Periplasmic-facing. Residues 356 to 376 (LFPIVGIGYAIVYYTIFRVLI) traverse the membrane as a helical segment. Residues 377–477 (KALDLKTPGR…TEMDEYIRNH (101 aa)) are Cytoplasmic-facing. Residues 399-477 (SEMAPALVAA…TEMDEYIRNH (79 aa)) enclose the PTS EIIB type-1 domain. Catalysis depends on C421, which acts as the Phosphocysteinsyse intermediate; for EIIB activity. C421 is subject to Phosphocysteine.

The protein resides in the cell inner membrane. It catalyses the reaction N(pros)-phospho-L-histidyl-[protein] + D-glucose(out) = D-glucose 6-phosphate(in) + L-histidyl-[protein]. Functionally, the phosphoenolpyruvate-dependent sugar phosphotransferase system (sugar PTS), a major carbohydrate active transport system, catalyzes the phosphorylation of incoming sugar substrates concomitantly with their translocation across the cell membrane. The enzyme II complex composed of PtsG and Crr is involved in glucose transport. Also functions as a chemoreceptor monitoring the environment for changes in sugar concentration. The protein is PTS system glucose-specific EIICB component (ptsG) of Escherichia coli O6:H1 (strain CFT073 / ATCC 700928 / UPEC).